The sequence spans 352 residues: MNELQLLGPRAHGEACGRAVLKASAEDFQVDEVLDIPLTGQGEHLWLWVEKRGLNTEEAARRIARAAGLPLKAVSYAGLKDRQALTRQWFSLHLPGKADPDLAAAQGDDLAILRSQRHNRKLQRGAHAANGFTLRLTALEADRDALEQRLQRIAEQGVPNYFGLQRFGFDGGNVVQARDFAARQELPVQRNLRSRLLSAARSHLFNQVLARRVAAGTWNQAQIGDLLAFTGSRSFFLAGEAECGDPRLAILDLHPTGPLWGDGPLPTGGATQMLEQSVADEAGQLVDWLVKADMAHERRILRLPIGGLSWHYPEPDILQLAFVLPAGCFATVVVRELLDLVPAGQTDTPCEF.

The active-site Nucleophile is D81. One can recognise a TRUD domain in the interval 157–303 (GVPNYFGLQR…MAHERRILRL (147 aa)).

This sequence belongs to the pseudouridine synthase TruD family.

The enzyme catalyses uridine(13) in tRNA = pseudouridine(13) in tRNA. In terms of biological role, responsible for synthesis of pseudouridine from uracil-13 in transfer RNAs. The chain is tRNA pseudouridine synthase D from Ectopseudomonas mendocina (strain ymp) (Pseudomonas mendocina).